We begin with the raw amino-acid sequence, 447 residues long: MKVTDKKIEGCQASITVEMDSTEVEEGLSKTYRRLVKKVEIPGFRKGKAPRDVFEKYVSREKMLDELVDDIVPEACQKAIQDEEIKPFATPKVAMVTTDPFVFSARIPLPPVVELGDYKTIRATKETVEIAEENIDTVVDQVLHQRATWETAERPVKMGDMLLMQVESTLNGEPYLNREDMQYSVREEAIYPAPGFGGYLVDMVAGEPKEFSIVFPEDHARAELAGKTAAFKVTVREIKEEKLPELNDAFAHELNPEFNTLSELRQRIRENMQDRQDDKAQAKFEDQIVEALIKMSKIDYPEVMVEAELDQIIEQQLQRLQSNVKSPEEFRAMLSQMTPEDMQQRYRPLAEQRVASSLALGKLATTENLVPNDEEVDAEIEKLITDAGDKKEEEKALYNQPETRGRLIQLLTARKTMAFIDEIALQPALEAVESKADEDEKTEEADK.

In terms of domain architecture, PPIase FKBP-type spans 159-244 (GDMLLMQVES…VREIKEEKLP (86 aa)).

This sequence belongs to the FKBP-type PPIase family. Tig subfamily.

It is found in the cytoplasm. It carries out the reaction [protein]-peptidylproline (omega=180) = [protein]-peptidylproline (omega=0). Functionally, involved in protein export. Acts as a chaperone by maintaining the newly synthesized protein in an open conformation. Functions as a peptidyl-prolyl cis-trans isomerase. The protein is Trigger factor of Dehalococcoides mccartyi (strain ATCC BAA-2100 / JCM 16839 / KCTC 5957 / BAV1).